Consider the following 148-residue polypeptide: Endothelial differentiation-related factor 1 homolog (148 aa).

The tract at residues 1 to 26 (MAESDWDTVTVLRKKGPSAAQAKSKQ) is disordered. One can recognise an HTH cro/C1-type domain in the interval 81–135 (IQQGRQSKGMTQKDLATKINEKPQVIADYESGRAIPNNQVMGKIERAIGLKLRGK). A DNA-binding region (H-T-H motif) is located at residues 92–111 (QKDLATKINEKPQVIADYES).

The protein resides in the nucleus. Probable transcriptional coactivator. The polypeptide is Endothelial differentiation-related factor 1 homolog (EDF1) (Gallus gallus (Chicken)).